Reading from the N-terminus, the 69-residue chain is Sec-independent protein translocase protein TatA (69 aa).

The helical transmembrane segment at 1–21 threads the bilayer; it reads MMPGPFELIIILVIVLLLFGG.

This sequence belongs to the TatA/E family. In terms of assembly, the Tat system comprises two distinct complexes: a TatABC complex, containing multiple copies of TatA, TatB and TatC subunits, and a separate TatA complex, containing only TatA subunits. Substrates initially bind to the TatABC complex, which probably triggers association of the separate TatA complex to form the active translocon.

It localises to the cell inner membrane. In terms of biological role, part of the twin-arginine translocation (Tat) system that transports large folded proteins containing a characteristic twin-arginine motif in their signal peptide across membranes. TatA could form the protein-conducting channel of the Tat system. This Vesicomyosocius okutanii subsp. Calyptogena okutanii (strain HA) protein is Sec-independent protein translocase protein TatA.